The primary structure comprises 353 residues: MTIALGKFTKDENDLFDIMDDWLRRDRFVFVGWSGLLLFPCAYFALGGWFTGTTFVTSWYTHGLASSYLEGCNFLTAAVSTPANSLAHSLLLLWGPEAQGDFTRWCQLGGLWTFVALHGAFGLIGFMLRQFELARSVQLRPYNAIAFSGPIAVFVSVFLIYPLGQSGWFFAPSFGVAAIFRFILFFQGFHNWTLNPFHMMGVAGVLGAALLCAIHGATVENTLFEDGDGANTFRAFNPTQAEETYSMVTANRFWSQIFGVAFSNKRWLHFFMLFVPVTGLWMSALGVVGLALNLRAYDFVSQEIRAAEDPEFETFYTKNILLNEGIRAWMAAQDQPHENLIFPEEVLPRGNAL.

T2 bears the N-acetylthreonine mark. A Phosphothreonine modification is found at T2. A helical transmembrane segment spans residues 41–61; it reads CAYFALGGWFTGTTFVTSWYT. A chlorophyll a-binding site is contributed by H118. A helical membrane pass occupies residues 125-141; that stretch reads GFMLRQFELARSVQLRP. 2 residues coordinate pheophytin a: Q130 and N143. The chain crosses the membrane as a helical span at residues 153 to 166; that stretch reads VFVSVFLIYPLGQS. H198 contributes to the chlorophyll a binding site. A helical transmembrane segment spans residues 208-228; it reads AALLCAIHGATVENTLFEDGD. 2 residues coordinate a plastoquinone: H215 and F262. Residue H215 coordinates Fe cation. H269 contributes to the Fe cation binding site. A helical membrane pass occupies residues 279 to 295; the sequence is GLWMSALGVVGLALNLR.

This sequence belongs to the reaction center PufL/M/PsbA/D family. As to quaternary structure, PSII is composed of 1 copy each of membrane proteins PsbA, PsbB, PsbC, PsbD, PsbE, PsbF, PsbH, PsbI, PsbJ, PsbK, PsbL, PsbM, PsbT, PsbX, PsbY, PsbZ, Psb30/Ycf12, at least 3 peripheral proteins of the oxygen-evolving complex and a large number of cofactors. It forms dimeric complexes. Requires The D1/D2 heterodimer binds P680, chlorophylls that are the primary electron donor of PSII, and subsequent electron acceptors. It shares a non-heme iron and each subunit binds pheophytin, quinone, additional chlorophylls, carotenoids and lipids. There is also a Cl(-1) ion associated with D1 and D2, which is required for oxygen evolution. The PSII complex binds additional chlorophylls, carotenoids and specific lipids. as cofactor.

The protein localises to the plastid. Its subcellular location is the chloroplast thylakoid membrane. It catalyses the reaction 2 a plastoquinone + 4 hnu + 2 H2O = 2 a plastoquinol + O2. Its function is as follows. Photosystem II (PSII) is a light-driven water:plastoquinone oxidoreductase that uses light energy to abstract electrons from H(2)O, generating O(2) and a proton gradient subsequently used for ATP formation. It consists of a core antenna complex that captures photons, and an electron transfer chain that converts photonic excitation into a charge separation. The D1/D2 (PsbA/PsbD) reaction center heterodimer binds P680, the primary electron donor of PSII as well as several subsequent electron acceptors. D2 is needed for assembly of a stable PSII complex. This Populus trichocarpa (Western balsam poplar) protein is Photosystem II D2 protein.